We begin with the raw amino-acid sequence, 178 residues long: Stathmin-2-B (178 aa).

An SLD domain is found at 38–178 (DDMEVKQLNK…KNKEQLELSG (141 aa)). Residues 75-178 (KRKDVSLEEI…KNKEQLELSG (104 aa)) adopt a coiled-coil conformation.

It belongs to the stathmin family. As to expression, nervous tissue.

It localises to the cytoplasm. The protein localises to the membrane. Its subcellular location is the cell projection. The protein resides in the lamellipodium. This is Stathmin-2-B (stmn2-b) from Xenopus laevis (African clawed frog).